The sequence spans 346 residues: Holliday junction branch migration complex subunit RuvB (346 aa).

The interval 1-181 (MSDRNPLIDA…FGIPVRLNFY (181 aa)) is large ATPase domain (RuvB-L). Residues Leu-20, Arg-21, Gly-62, Lys-65, Thr-66, Thr-67, 128 to 130 (EDF), Arg-171, Tyr-181, and Arg-218 contribute to the ATP site. Thr-66 provides a ligand contact to Mg(2+). Residues 182–252 (TVEELEYIVR…IADEALSRLE (71 aa)) form a small ATPAse domain (RuvB-S) region. Residues 255–346 (NRGLDQLDRR…SQYGLFMEDE (92 aa)) are head domain (RuvB-H). Positions 291, 310, and 315 each coordinate DNA.

This sequence belongs to the RuvB family. Homohexamer. Forms an RuvA(8)-RuvB(12)-Holliday junction (HJ) complex. HJ DNA is sandwiched between 2 RuvA tetramers; dsDNA enters through RuvA and exits via RuvB. An RuvB hexamer assembles on each DNA strand where it exits the tetramer. Each RuvB hexamer is contacted by two RuvA subunits (via domain III) on 2 adjacent RuvB subunits; this complex drives branch migration. In the full resolvosome a probable DNA-RuvA(4)-RuvB(12)-RuvC(2) complex forms which resolves the HJ.

Its subcellular location is the cytoplasm. It carries out the reaction ATP + H2O = ADP + phosphate + H(+). Functionally, the RuvA-RuvB-RuvC complex processes Holliday junction (HJ) DNA during genetic recombination and DNA repair, while the RuvA-RuvB complex plays an important role in the rescue of blocked DNA replication forks via replication fork reversal (RFR). RuvA specifically binds to HJ cruciform DNA, conferring on it an open structure. The RuvB hexamer acts as an ATP-dependent pump, pulling dsDNA into and through the RuvAB complex. RuvB forms 2 homohexamers on either side of HJ DNA bound by 1 or 2 RuvA tetramers; 4 subunits per hexamer contact DNA at a time. Coordinated motions by a converter formed by DNA-disengaged RuvB subunits stimulates ATP hydrolysis and nucleotide exchange. Immobilization of the converter enables RuvB to convert the ATP-contained energy into a lever motion, pulling 2 nucleotides of DNA out of the RuvA tetramer per ATP hydrolyzed, thus driving DNA branch migration. The RuvB motors rotate together with the DNA substrate, which together with the progressing nucleotide cycle form the mechanistic basis for DNA recombination by continuous HJ branch migration. Branch migration allows RuvC to scan DNA until it finds its consensus sequence, where it cleaves and resolves cruciform DNA. In Brucella suis (strain ATCC 23445 / NCTC 10510), this protein is Holliday junction branch migration complex subunit RuvB.